The chain runs to 387 residues: Odorant receptor 94a (387 aa).

At 1–45 (MDKHKDRIESMRLILQVMQLFGLWPWSLKSEEEWTFTGFVKRNYR) the chain is on the cytoplasmic side. Residues 46-66 (FLLHLPITFTFIGLMWLEAFI) traverse the membrane as a helical segment. Topologically, residues 67 to 75 (SSNLEQAGQ) are extracellular. A helical membrane pass occupies residues 76 to 96 (VLYMSITEMALVVKILSIWHY). Residues 97-133 (RTEAWRLMYELQHAPDYQLHNQEEVDFWRREQRFFKW) are Cytoplasmic-facing. A helical membrane pass occupies residues 134-154 (FFYIYILISLGVVYSGCTGVL). Over 155 to 191 (FLEGYELPFAYYVPFEWQNERRYWFAYGYDMAGMTLT) the chain is Extracellular. A helical membrane pass occupies residues 192 to 212 (CISNITLDTLGCYFLFHISLL). Residues 213–255 (YRLLGLRLRETKNMKNDTIFGQQLRAIFIMHQRIRSLTLTCQR) lie on the Cytoplasmic side of the membrane. Residues 256–276 (IVSPYILSQIILSALIICFSG) traverse the membrane as a helical segment. The Extracellular portion of the chain corresponds to 277-290 (YRLQHVGIRDNPGQ). A helical transmembrane segment spans residues 291–311 (FISMLQFVSVMILQIYLPCYY). Topologically, residues 312-362 (GNEITVYANQLTNEVYHTNWLECRPPIRKLLNAYMEHLKKPVTIRAGNFFA) are cytoplasmic. A helical membrane pass occupies residues 363-383 (VGLPIFVKTINNAYSFLALLL). The N-linked (GlcNAc...) asparagine glycan is linked to Asn-384. Over 384 to 387 (NVSN) the chain is Extracellular.

This sequence belongs to the insect chemoreceptor superfamily. Heteromeric odorant receptor channel (TC 1.A.69) family. Or2a subfamily. In terms of assembly, interacts with Orco. Complexes exist early in the endomembrane system in olfactory sensory neurons (OSNs), coupling these complexes to the conserved ciliary trafficking pathway.

The protein localises to the cell membrane. Functionally, odorant receptor which mediates acceptance or avoidance behavior, depending on its substrates. The odorant receptor repertoire encodes a large collection of odor stimuli that vary widely in identity, intensity, and duration. May form a complex with Orco to form odorant-sensing units, providing sensitive and prolonged odorant signaling and calcium permeability. The polypeptide is Odorant receptor 94a (Or94a) (Drosophila melanogaster (Fruit fly)).